We begin with the raw amino-acid sequence, 1123 residues long: Eukaryotic translation initiation factor 2-alpha kinase PK4 (1123 aa).

The segment at Met1–Lys30 is disordered. Residues Asn21 to Lys30 are compositionally biased toward basic and acidic residues. Residues Ile245–Val253 and Lys270 contribute to the ATP site. Disordered stretches follow at residues Phe409–Gly493, Arg572–Asp609, and Glu742–Ile800. The segment covering Lys419 to His428 has biased composition (basic and acidic residues). Over residues His455–Ile477 the composition is skewed to basic residues. 5 consecutive repeat copies span residues Asp576–Gly582, Asp583–Gly589, Asp590–Gly596, Asp597–Gly603, and Asp604–Asp610. The interval Asp576 to Asp610 is 5 X 7 AA tandem repeat of D-K-N-[GE]-L-D-[GD]. Positions Thr678 to Leu1049 constitute a Protein kinase domain. Residues Asn743 to Asn754 show a composition bias toward acidic residues. Catalysis depends on Asp886, which acts as the Proton acceptor. Thr953 bears the Phosphothreonine mark.

The protein belongs to the protein kinase superfamily. Ser/Thr protein kinase family. GCN2 subfamily. May form oligomers in response to stress; oligomerization may result in catalytic activity. Interacts with BIP; the interaction is disrupted in response to stress. In terms of processing, auto-phosphorylated.

The protein localises to the endoplasmic reticulum membrane. The enzyme catalyses L-seryl-[protein] + ATP = O-phospho-L-seryl-[protein] + ADP + H(+). The catalysed reaction is L-threonyl-[protein] + ATP = O-phospho-L-threonyl-[protein] + ADP + H(+). Dissociation from BIP and oligomerization, may results autophosphorylation and kinase activity induction. In terms of biological role, during the asexual blood stage, phosphorylates translation factor eIF2alpha in late schizonts resulting in protein translation inhibition. Plays a role in trophozoite differentiation into schizonts. This chain is Eukaryotic translation initiation factor 2-alpha kinase PK4, found in Plasmodium falciparum.